We begin with the raw amino-acid sequence, 262 residues long: MQVDLLSSAQSAHALHLFHQHSPLVHCMTNDVVQTFTANTLLALGASPAMVIETEEASQFAAIASALLINVGTLTQPRVQAMSAAVEQATRSQTPWTLDPVAVGALDYRRRFCVELLSHKPTAIRGNASEIMALAGVANGGRGVDTTDAAANAIPAAQTLARETGAIVVVTGEVDYVTDGHRIVGIHGGNPLMTKVVGTGCALSAVVAACCALPGDTLENIASACHWMKQAGERAVARSEGPGSFVPHFLDALWQLAQEVQA.

Residue M50 coordinates substrate. The ATP site is built by R125 and T171. G198 contributes to the substrate binding site.

Belongs to the Thz kinase family. Mg(2+) serves as cofactor.

It carries out the reaction 5-(2-hydroxyethyl)-4-methylthiazole + ATP = 4-methyl-5-(2-phosphooxyethyl)-thiazole + ADP + H(+). The protein operates within cofactor biosynthesis; thiamine diphosphate biosynthesis; 4-methyl-5-(2-phosphoethyl)-thiazole from 5-(2-hydroxyethyl)-4-methylthiazole: step 1/1. Catalyzes the phosphorylation of the hydroxyl group of 4-methyl-5-beta-hydroxyethylthiazole (THZ). This chain is Hydroxyethylthiazole kinase, found in Escherichia coli O81 (strain ED1a).